The chain runs to 274 residues: 4-hydroxy-tetrahydrodipicolinate reductase (274 aa).

NAD(+) is bound by residues 8–13 (GALGRM), E34, 102–104 (GTT), and 128–131 (SQNF). The Proton donor/acceptor role is filled by H160. A (S)-2,3,4,5-tetrahydrodipicolinate-binding site is contributed by H161. The active-site Proton donor is the K164. Position 170–171 (170–171 (GT)) interacts with (S)-2,3,4,5-tetrahydrodipicolinate.

The protein belongs to the DapB family.

It is found in the cytoplasm. It catalyses the reaction (S)-2,3,4,5-tetrahydrodipicolinate + NAD(+) + H2O = (2S,4S)-4-hydroxy-2,3,4,5-tetrahydrodipicolinate + NADH + H(+). The catalysed reaction is (S)-2,3,4,5-tetrahydrodipicolinate + NADP(+) + H2O = (2S,4S)-4-hydroxy-2,3,4,5-tetrahydrodipicolinate + NADPH + H(+). It participates in amino-acid biosynthesis; L-lysine biosynthesis via DAP pathway; (S)-tetrahydrodipicolinate from L-aspartate: step 4/4. Its function is as follows. Catalyzes the conversion of 4-hydroxy-tetrahydrodipicolinate (HTPA) to tetrahydrodipicolinate. This chain is 4-hydroxy-tetrahydrodipicolinate reductase, found in Methanocaldococcus jannaschii (strain ATCC 43067 / DSM 2661 / JAL-1 / JCM 10045 / NBRC 100440) (Methanococcus jannaschii).